The chain runs to 344 residues: tRNA dimethylallyltransferase (344 aa).

An ATP-binding site is contributed by G43–S50. T45 to S50 contacts substrate. Positions D68–Q71 are interaction with substrate tRNA.

This sequence belongs to the IPP transferase family. In terms of assembly, monomer. It depends on Mg(2+) as a cofactor.

It carries out the reaction adenosine(37) in tRNA + dimethylallyl diphosphate = N(6)-dimethylallyladenosine(37) in tRNA + diphosphate. Functionally, catalyzes the transfer of a dimethylallyl group onto the adenine at position 37 in tRNAs that read codons beginning with uridine, leading to the formation of N6-(dimethylallyl)adenosine (i(6)A). This is tRNA dimethylallyltransferase from Protochlamydia amoebophila (strain UWE25).